Reading from the N-terminus, the 717-residue chain is MGRLMIAVLLCVMISQGFCSGVFELKLQEFLNKKGVTGNANCCKGSAAEGHQCECKTFFRICLKHYQANVSPDPPCTYGGAVTPVLGSNSFQVPESFPDSSFTNPIPFAFGFTWPGTFSLIIEALHTDSTDDLSTENPDRLISRMTTQRHLTVGEEWSQDLQVGGRTELKYSYRFVCDEHYYGEGCSVFCRPRDDTFGHFTCGERGEIICNSGWKGQYCTEPICLPGCDEDHGFCDKPGECKCRVGFSGKYCDDCIRYPGCLHGTCQQPWQCNCQEGWGGLFCNQDLNYCTHHKPCQNGATCTNTGQGSYTCSCRPGFTGDSCEIEVNECSGSPCRNGGSCTDLENTYSCTCPPGFYGRNCELSAMTCADGPCFNGGHCADNPEGGYFCQCPMGYAGFNCEKKIDHCSSNPCSNDAQCLDLVDSYLCQCPEGFTGTHCEDNIDECATYPCQNGGTCQDGLSDYTCTCPPGYTGKNCTSAVNKCLHNPCHNGATCHEMDNRYVCACIPGYGGRNCQFLLPENPQGQAIVEGADKRYSYEEDDGGFPWTAVCAGIILVLLVLIGGSVFVIYIRLKLQQRSQQIDSHSEIETMNNLTNNRSREKDLSVSIIGATQVKNINKKVDFQSDGDKNGFKSRYSLVDYNLVHELKQEDLGKEDSERSEATKCEPLDSDSEEKHRNHLKSDSSERKRTESLCKDTKYQSVFVLSEEKDECIIATEV.

An N-terminal signal peptide occupies residues 1–19 (MGRLMIAVLLCVMISQGFC). Residues 20–547 (SGVFELKLQE…EEDDGGFPWT (528 aa)) lie on the Extracellular side of the membrane. The region spanning 175–219 (FVCDEHYYGEGCSVFCRPRDDTFGHFTCGERGEIICNSGWKGQYC) is the DSL domain. Cystine bridges form between cysteine 177–cysteine 186, cysteine 190–cysteine 202, cysteine 210–cysteine 219, cysteine 224–cysteine 235, cysteine 228–cysteine 241, cysteine 243–cysteine 252, cysteine 261–cysteine 266, cysteine 274–cysteine 283, cysteine 290–cysteine 302, cysteine 296–cysteine 312, cysteine 314–cysteine 323, cysteine 330–cysteine 341, cysteine 335–cysteine 350, cysteine 352–cysteine 361, cysteine 368–cysteine 379, cysteine 373–cysteine 389, cysteine 391–cysteine 400, cysteine 407–cysteine 418, cysteine 412–cysteine 427, cysteine 429–cysteine 438, cysteine 445–cysteine 456, cysteine 450–cysteine 465, cysteine 467–cysteine 476, cysteine 483–cysteine 494, cysteine 488–cysteine 503, and cysteine 505–cysteine 514. EGF-like domains are found at residues 220–253 (TEPI…KYCD), 257–284 (RYPG…LFCN), and 286–324 (DLNY…DSCE). In terms of domain architecture, EGF-like 4; calcium-binding spans 326 to 362 (EVNECSGSPCRNGGSCTDLENTYSCTCPPGFYGRNCE). 2 EGF-like domains span residues 364–401 (SAMT…FNCE) and 403–439 (KIDH…THCE). An EGF-like 7; calcium-binding domain is found at 441-477 (NIDECATYPCQNGGTCQDGLSDYTCTCPPGYTGKNCT). The N-linked (GlcNAc...) asparagine glycan is linked to asparagine 475. One can recognise an EGF-like 8 domain in the interval 479-515 (AVNKCLHNPCHNGATCHEMDNRYVCACIPGYGGRNCQ). The helical transmembrane segment at 548-568 (AVCAGIILVLLVLIGGSVFVI) threads the bilayer. Over 569 to 717 (YIRLKLQQRS…KDECIIATEV (149 aa)) the chain is Cytoplasmic. A disordered region spans residues 649–693 (EDLGKEDSERSEATKCEPLDSDSEEKHRNHLKSDSSERKRTESLC).

Interacts with mib. Post-translationally, ubiquitinated by mib, leading to its endocytosis and subsequent degradation. Expressed in both mesodermal and neuroectodermal regions. In the developing nervous system, it is expressed in overlapping regions with deltaB (dlb) and deltaA (dla); in the neural plate, dld is expressed in patches of contiguous cells with dla, while dlb is confined to scattered cells within those patches that will differentiate as neurons. In somites, it marks the anterior part of each formed somite, while deltaC (dlc) marks the posterior part. In 24 hours embryos, expressed in the hindbrain in stripes adjacent to rhombomere boundaries, but not in the actual boundary cells.

The protein resides in the membrane. Its function is as follows. Acts as a ligand for Notch receptors and is involved in primary neurogenesis and somitogenesis. Can activate Notch receptors, thereby playing a key role in lateral inhibition, a process that prevents the immediate neighbors of each nascent neural cell from simultaneously embarking on neural differentiation. Required in somite segmentation to keep the oscillations of neighboring presomitic mesoderm cells synchronized. The sequence is that of Delta-like protein D (dld) from Danio rerio (Zebrafish).